We begin with the raw amino-acid sequence, 318 residues long: Homeobox protein Nkx-2.5 (318 aa).

Residues 137–196 (RRKPRVLFSQAQVYELERRFKQQRYLSAPERDQLASVLKLTSTQVKIWFQNRRYKCKRQR) constitute a DNA-binding region (homeobox).

This sequence belongs to the NK-2 homeobox family. As to quaternary structure, homodimer (via the homeobox); binds DNA as homodimer. Interacts (via the homeobox) with TBX5 (via the T-box); this complex binds DNA. Interacts with HIPK1 and HIPK2, but not HIPK3. Interacts with the C-terminal zinc finger of GATA4 through its homeobox domain. Also interacts with JARID2 which represses its ability to activate transcription of ANF. Interacts with FBLIM1. Interacts with TBX18. Interacts with histone methyltransferase NSD2 (via HMG box). Interacts with NEDD9. Interacts with TBX1. As to expression, predominantly in the adult and embryonic heart, and to a lesser extent in lingual muscle, spleen and stomach.

It localises to the nucleus. In terms of biological role, transcription factor required for the development of the heart and the spleen. During heart development, acts as a transcriptional activator of NPPA/ANF in cooperation with GATA4. May cooperate with TBX2 to negatively modulate expression of NPPA/ANF in the atrioventricular canal. Binds to the core DNA motif of NPPA promoter. Together with PBX1, required for spleen development through a mechanism that involves CDKN2B repression. Positively regulates transcription of genes such as COL3A1 and MMP2, resulting in increased pulmonary endothelial fibrosis in response to hypoxia. The chain is Homeobox protein Nkx-2.5 (Nkx2-5) from Mus musculus (Mouse).